We begin with the raw amino-acid sequence, 474 residues long: Citrate synthase, mitochondrial (474 aa).

The transit peptide at 1–35 (MASTLRLSTSALRSSTLAGKPVVQSVAFNGLRCYS) directs the protein to the mitochondrion. Catalysis depends on residues histidine 310, histidine 356, and aspartate 411.

The protein belongs to the citrate synthase family.

It localises to the mitochondrion matrix. The catalysed reaction is oxaloacetate + acetyl-CoA + H2O = citrate + CoA + H(+). The protein operates within carbohydrate metabolism; tricarboxylic acid cycle; isocitrate from oxaloacetate: step 1/2. The polypeptide is Citrate synthase, mitochondrial (citA) (Emericella nidulans (strain FGSC A4 / ATCC 38163 / CBS 112.46 / NRRL 194 / M139) (Aspergillus nidulans)).